A 395-amino-acid chain; its full sequence is S-adenosylmethionine synthase (395 aa).

Position 16 (His-16) interacts with ATP. A Mg(2+)-binding site is contributed by Asp-18. Glu-44 provides a ligand contact to K(+). The L-methionine site is built by Glu-57 and Gln-100. Residues 100 to 110 (QSPDIAQGVDD) form a flexible loop region. Residues 174-176 (DAK), 241-242 (RF), Asp-250, 256-257 (RK), Ala-273, and Lys-277 each bind ATP. Asp-250 lines the L-methionine pocket. Lys-281 contacts L-methionine.

The protein belongs to the AdoMet synthase family. Homotetramer; dimer of dimers. Requires Mg(2+) as cofactor. K(+) serves as cofactor.

The protein localises to the cytoplasm. The enzyme catalyses L-methionine + ATP + H2O = S-adenosyl-L-methionine + phosphate + diphosphate. It participates in amino-acid biosynthesis; S-adenosyl-L-methionine biosynthesis; S-adenosyl-L-methionine from L-methionine: step 1/1. In terms of biological role, catalyzes the formation of S-adenosylmethionine (AdoMet) from methionine and ATP. The overall synthetic reaction is composed of two sequential steps, AdoMet formation and the subsequent tripolyphosphate hydrolysis which occurs prior to release of AdoMet from the enzyme. This is S-adenosylmethionine synthase from Levilactobacillus brevis (strain ATCC 367 / BCRC 12310 / CIP 105137 / JCM 1170 / LMG 11437 / NCIMB 947 / NCTC 947) (Lactobacillus brevis).